A 272-amino-acid polypeptide reads, in one-letter code: HMP-PP phosphatase (272 aa).

Catalysis depends on Asp-8, which acts as the Nucleophile. 3 residues coordinate Mg(2+): Asp-8, Asp-10, and Asp-212.

Belongs to the HAD-like hydrolase superfamily. Cof family. Requires Mg(2+) as cofactor.

The catalysed reaction is 4-amino-2-methyl-5-(diphosphooxymethyl)pyrimidine + H2O = 4-amino-2-methyl-5-(phosphooxymethyl)pyrimidine + phosphate + H(+). Catalyzes the hydrolysis of 4-amino-2-methyl-5-hydroxymethylpyrimidine pyrophosphate (HMP-PP) to 4-amino-2-methyl-5-hydroxymethylpyrimidine phosphate (HMP-P). This chain is HMP-PP phosphatase, found in Salmonella newport (strain SL254).